Reading from the N-terminus, the 376-residue chain is Alanine racemase (376 aa).

Lys40 functions as the Proton acceptor; specific for D-alanine in the catalytic mechanism. Lys40 carries the post-translational modification N6-(pyridoxal phosphate)lysine. A substrate-binding site is contributed by Arg138. The active-site Proton acceptor; specific for L-alanine is Tyr270. Residue Met317 coordinates substrate.

Belongs to the alanine racemase family. Pyridoxal 5'-phosphate is required as a cofactor.

The enzyme catalyses L-alanine = D-alanine. Its pathway is amino-acid biosynthesis; D-alanine biosynthesis; D-alanine from L-alanine: step 1/1. Catalyzes the interconversion of L-alanine and D-alanine. May also act on other amino acids. The polypeptide is Alanine racemase (alr) (Lactobacillus gasseri (strain ATCC 33323 / DSM 20243 / BCRC 14619 / CIP 102991 / JCM 1131 / KCTC 3163 / NCIMB 11718 / NCTC 13722 / AM63)).